The chain runs to 95 residues: Small ribosomal subunit protein mS37 (95 aa).

Residues 27-69 form the CHCH domain; it reads ANKCLVLMSNLLQCWSSYGHMSPKCAGLVTELKSCTSESALGK. 2 short sequence motifs (cx9C motif) span residues 30 to 40 and 51 to 61; these read CLVLMSNLLQC and CAGLVTELKSC. Cystine bridges form between C30–C61 and C40–C51.

Belongs to the mitochondrion-specific ribosomal protein mS37 family. In terms of assembly, component of the mitochondrial small ribosomal subunit (mt-SSU). Mature yeast 74S mitochondrial ribosomes consist of a small (37S) and a large (54S) subunit. The 37S small subunit contains a 15S ribosomal RNA (15S mt-rRNA) and 34 different proteins. The 54S large subunit contains a 21S rRNA (21S mt-rRNA) and 46 different proteins.

Its subcellular location is the mitochondrion. It is found in the mitochondrion matrix. Functionally, component of the mitochondrial ribosome (mitoribosome), a dedicated translation machinery responsible for the synthesis of mitochondrial genome-encoded proteins, including at least some of the essential transmembrane subunits of the mitochondrial respiratory chain. The mitoribosomes are attached to the mitochondrial inner membrane and translation products are cotranslationally integrated into the membrane. In Saccharomyces cerevisiae (strain ATCC 204508 / S288c) (Baker's yeast), this protein is Small ribosomal subunit protein mS37 (MRP10).